A 472-amino-acid polypeptide reads, in one-letter code: Ribosomal protein uS12 methylthiotransferase RimO (472 aa).

In terms of domain architecture, MTTase N-terminal spans 33–143 (NRIGFVSLGC…VLKHVHKYVP (111 aa)). Cys42, Cys78, Cys107, Cys175, Cys179, and Cys182 together coordinate [4Fe-4S] cluster. Residues 161-398 (LTPKHYAYLK…MEVQAEISAE (238 aa)) form the Radical SAM core domain. The TRAM domain maps to 401–467 (ARFVGRTLDI…EHDLWAEVVD (67 aa)).

This sequence belongs to the methylthiotransferase family. RimO subfamily. The cofactor is [4Fe-4S] cluster.

The protein resides in the cytoplasm. The enzyme catalyses L-aspartate(89)-[ribosomal protein uS12]-hydrogen + (sulfur carrier)-SH + AH2 + 2 S-adenosyl-L-methionine = 3-methylsulfanyl-L-aspartate(89)-[ribosomal protein uS12]-hydrogen + (sulfur carrier)-H + 5'-deoxyadenosine + L-methionine + A + S-adenosyl-L-homocysteine + 2 H(+). Catalyzes the methylthiolation of an aspartic acid residue of ribosomal protein uS12. The chain is Ribosomal protein uS12 methylthiotransferase RimO from Shewanella baltica (strain OS195).